The sequence spans 763 residues: uncharacterized protein (763 aa).

In terms of domain architecture, TR mART core spans 380–607 (DSVLNPFNTN…YNIKVITMRL (228 aa)). A helical membrane pass occupies residues 684 to 700 (SYVSIYALLCPLLTNIY).

Its subcellular location is the membrane. This is an uncharacterized protein from Acanthamoeba polyphaga mimivirus (APMV).